A 438-amino-acid polypeptide reads, in one-letter code: MEYNVEDLSPVKKKITITVPVEEVNAALAATIAVYQTSVNLSGFRKGKVPASIIEGRFRKEVYNEATQDLVNVHINEVVGSLDTQPASRIDFDGGQLERDKEFVYTISFEVMPVFEMPDYDGMEVEQEKPEVDENEVNAVLERIRTNLADVVTVAEHRPAKDGEIAVLDFAAYENGEPIAGVAADNFELNLGGNQALVDFEELVKRAVPGEATEGDVTFPEDFINPEFAGKTVTMKVTVHAVKERKLPELDDELAKKAGGFESFDKMRETVEQSYLESRTQLCKAQAQKTMVDSLLKTLDFPVPESMLEMYMDSLLAEKKDRLERQGKSLESLGKSPEELRDEVRPEAEHIARTQIFLVKAAQKEGVTVSEQEVDRQLQQIAMRSGQDFQTMKEHYTRTNMIFNLRDRMLADKAMEAIYEKAAIKEVPAKKEAAEAAE.

Residues 163–248 (GEIAVLDFAA…VHAVKERKLP (86 aa)) form the PPIase FKBP-type domain.

This sequence belongs to the FKBP-type PPIase family. Tig subfamily.

The protein localises to the cytoplasm. The enzyme catalyses [protein]-peptidylproline (omega=180) = [protein]-peptidylproline (omega=0). Involved in protein export. Acts as a chaperone by maintaining the newly synthesized protein in an open conformation. Functions as a peptidyl-prolyl cis-trans isomerase. The protein is Trigger factor of Oleidesulfovibrio alaskensis (strain ATCC BAA-1058 / DSM 17464 / G20) (Desulfovibrio alaskensis).